A 373-amino-acid chain; its full sequence is Leucine aminopeptidase 1 (373 aa).

A signal peptide spans 1–18 (MKLLSVLALSATASSVLG). Residues 19–75 (ASIPVDTRAEKFLIELAPGETRWVTEEEKWALKESGQDFFDITDEEVGFTAAVAQPA) constitute a propeptide that is removed on maturation. Histidine 176 and aspartate 195 together coordinate Zn(2+). Asparagine 196 carries N-linked (GlcNAc...) asparagine glycosylation. Residues glutamate 234 and aspartate 261 each coordinate Zn(2+). Asparagine 288 is a glycosylation site (N-linked (GlcNAc...) asparagine). Cysteines 310 and 314 form a disulfide. Residue histidine 343 coordinates Zn(2+). Residue asparagine 348 is glycosylated (N-linked (GlcNAc...) asparagine).

Belongs to the peptidase M28 family. M28E subfamily. In terms of assembly, monomer. The cofactor is Zn(2+).

The protein resides in the secreted. In terms of biological role, extracellular aminopeptidase that allows assimilation of proteinaceous substrates. The protein is Leucine aminopeptidase 1 (LAP1) of Arthroderma gypseum (strain ATCC MYA-4604 / CBS 118893) (Microsporum gypseum).